A 427-amino-acid polypeptide reads, in one-letter code: Glutamyl-tRNA reductase (427 aa).

Substrate-binding positions include 49–52 (TCNR), S101, 106–108 (EPQ), and Q112. The active-site Nucleophile is the C50. Residue 181 to 186 (GAGETI) participates in NADP(+) binding. Residues 407-427 (FPATPGYRHPPVRPDDADPAP) form a disordered region. Residues 418–427 (VRPDDADPAP) are compositionally biased toward basic and acidic residues.

This sequence belongs to the glutamyl-tRNA reductase family. As to quaternary structure, homodimer.

It catalyses the reaction (S)-4-amino-5-oxopentanoate + tRNA(Glu) + NADP(+) = L-glutamyl-tRNA(Glu) + NADPH + H(+). It functions in the pathway porphyrin-containing compound metabolism; protoporphyrin-IX biosynthesis; 5-aminolevulinate from L-glutamyl-tRNA(Glu): step 1/2. Catalyzes the NADPH-dependent reduction of glutamyl-tRNA(Glu) to glutamate 1-semialdehyde (GSA). The protein is Glutamyl-tRNA reductase of Stenotrophomonas maltophilia (strain K279a).